A 156-amino-acid polypeptide reads, in one-letter code: MSRKNQAPKREVLPDPLYNSKLVTRLINRVMLDGKRGTAASIVYGAFDQIKEATGNDALEVFETAMENIMPVLEVRARRVGGSNYQVPVEVRPERRTTLGLRWLVTIARNRGEHTMIDRLAKEIMDAANNTGAAVKKREDTHKMAEANRAFAHFRW.

It belongs to the universal ribosomal protein uS7 family. As to quaternary structure, part of the 30S ribosomal subunit. Contacts proteins S9 and S11.

One of the primary rRNA binding proteins, it binds directly to 16S rRNA where it nucleates assembly of the head domain of the 30S subunit. Is located at the subunit interface close to the decoding center, probably blocks exit of the E-site tRNA. In Streptococcus suis (strain 98HAH33), this protein is Small ribosomal subunit protein uS7.